The sequence spans 434 residues: E3 ubiquitin-protein transferase MAEA (434 aa).

The extracellular and involved in cell to cell contact stretch occupies residues 1–124 (MAVQESAAQL…AAASVWKRKR (124 aa)). The residue at position 28 (threonine 28) is a Phosphothreonine. Residues 121–153 (KRKRMDRMMVEHLLRCGYYNTAVKLARQSGIED) enclose the LisH domain. The CTLH domain maps to 159-254 (MFLTAKEVEE…ELIRQNKRLD (96 aa)). The tract at residues 190 to 222 (RKMKGRQSEHDAKTGRKSRVASGSPKESEDLGM) is disordered. The segment at 352-419 (CPVCSRSLNK…QDDKVVCPRT (68 aa)) adopts an RING-Gid-type zinc-finger fold.

Identified in the CTLH complex that contains GID4, RANBP9 and/or RANBP10, MKLN1, MAEA, RMND5A (or alternatively its paralog RMND5B), GID8, ARMC8, WDR26 and YPEL5. Within this complex, MAEA, RMND5A (or alternatively its paralog RMND5B), GID8, WDR26, and RANBP9 and/or RANBP10 form the catalytic core, while GID4, MKLN1, ARMC8 and YPEL5 have ancillary roles. Interacts with F-actin. Post-translationally, autoubiquitinated as component of the CTLH E3 ubiquitin-protein ligase complex (in vitro).

The protein resides in the cytoplasm. Its subcellular location is the nucleus. It is found in the nucleoplasm. It localises to the nucleus matrix. The protein localises to the cell membrane. The protein resides in the cytoskeleton. The catalysed reaction is S-ubiquitinyl-[E2 ubiquitin-conjugating enzyme]-L-cysteine + [acceptor protein]-L-lysine = [E2 ubiquitin-conjugating enzyme]-L-cysteine + N(6)-ubiquitinyl-[acceptor protein]-L-lysine.. In terms of biological role, core component of the CTLH E3 ubiquitin-protein ligase complex that selectively accepts ubiquitin from UBE2H and mediates ubiquitination and subsequent proteasomal degradation of the transcription factor HBP1. MAEA and RMND5A are both required for catalytic activity of the CTLH E3 ubiquitin-protein ligase complex. MAEA is required for normal cell proliferation. The CTLH E3 ubiquitin-protein ligase complex is not required for the degradation of enzymes involved in gluconeogenesis, such as FBP1. Plays a role in erythroblast enucleation during erythrocyte maturation and in the development of mature macrophages. Mediates the attachment of erythroid cell to mature macrophages; this MAEA-mediated contact inhibits erythroid cell apoptosis. Participates in erythroblastic island formation, which is the functional unit of definitive erythropoiesis. Associates with F-actin to regulate actin distribution in erythroblasts and macrophages. May contribute to nuclear architecture and cells division events. This is E3 ubiquitin-protein transferase MAEA (MAEA) from Bos taurus (Bovine).